A 316-amino-acid polypeptide reads, in one-letter code: MGGSAPGQSPYQRLSQRMLDISGDRGVLKDVIREGAGELVTPDASVLVKYSGYLEHMDKPFDSNCFRKTPRLMKLGEDITLWGMELGLLSMRRGELARFLFKPTYAYGTLGCPPLIPPNTTVLFEIELLDFLDSAESDKFCALSAEQQDQFPLQKVLKVAATEREFGNYLFRQHRFYDAKVRYKRALLLLHRRSAPPEEQHLVEAAKLLVLLNLSFTYLKLERPTTALCYGEQALVIDQKNAKALFRCGQACLLMTEYQKARDFLVQAQKAQPFNHDINNELKKLASCYKDYTDKEKEMCHRMFAPCDDDSAVGEN.

Residues 43 to 132 (DASVLVKYSG…LFEIELLDFL (90 aa)) enclose the PPIase FKBP-type domain. TPR repeat units follow at residues 160-193 (AATEREFGNYLFRQHRFYDAKVRYKRALLLLHRR), 208-241 (LLVLLNLSFTYLKLERPTTALCYGEQALVIDQKN), and 242-275 (AKALFRCGQACLLMTEYQKARDFLVQAQKAQPFN).

The protein belongs to the FKBP6 family. In terms of assembly, interacts with HSP72/HSPA2 and CLTC. Interacts with GAPDH; leading to inhibit GAPDH catalytic activity. Interacts (via TPR repeats) with HSP90. Specifically expressed in testis and sperm.

It is found in the cytoplasm. It localises to the cytosol. Its subcellular location is the nucleus. Functionally, co-chaperone required during spermatogenesis to repress transposable elements and prevent their mobilization, which is essential for the germline integrity. Acts via the piRNA metabolic process, which mediates the repression of transposable elements during meiosis by forming complexes composed of piRNAs and Piwi proteins and govern the methylation and subsequent repression of transposons. Acts as a co-chaperone via its interaction with HSP90 and is required for the piRNA amplification process, the secondary piRNA biogenesis. May be required together with HSP90 in removal of 16 nucleotide ping-pong by-products from Piwi complexes, possibly facilitating turnover of Piwi complexes. This Equus caballus (Horse) protein is Inactive peptidyl-prolyl cis-trans isomerase FKBP6 (FKBP6).